The primary structure comprises 552 residues: Leiomodin-2 (552 aa).

The interval M1 to P47 is interaction with tropomyosin alpha. Interaction with actin stretches follow at residues M1 to V169 and R170 to K498. The stretch at Y13–L46 forms a coiled coil. 3 disordered regions span residues L33 to E67, G87 to D191, and M364 to M531. Residues R51 to F64 show a composition bias toward polar residues. Residues L86–S151 are a coiled coil. Composition is skewed to acidic residues over residues S93–F108 and V115–E147. Over residues M364 to Q377 the composition is skewed to basic and acidic residues. The segment covering P398 to K415 has biased composition (low complexity). Residues S425–I450 are compositionally biased toward pro residues. A compositionally biased stretch (basic residues) spans Q478–K488. Residues H489–S513 show a composition bias toward basic and acidic residues. Polar residues predominate over residues R514–R524. The segment at L526 to V545 is interaction with actin 3. Residues L526–V545 enclose the WH2 domain.

The protein belongs to the tropomodulin family. Can bind at least three actin monomers and thereby provides a nucleus for actin filament formation. Interacts (via N-terminus) with tropomyosin alpha (TPM1) (via N-terminus). May also interact with TPM2 (via N-terminus).

It is found in the cytoplasm. The protein localises to the myofibril. Its subcellular location is the sarcomere. It localises to the m line. The protein resides in the cytoskeleton. Functionally, mediates nucleation of actin filaments and thereby promotes actin polymerization. Plays a role in the regulation of actin filament length. Required for normal sarcomere organization in the heart, and for normal heart function. The protein is Leiomodin-2 (LMOD2) of Gallus gallus (Chicken).